Consider the following 99-residue polypeptide: NADH-quinone oxidoreductase subunit K (99 aa).

A run of 3 helical transmembrane segments spans residues 3-23, 28-48, and 62-82; these read PANY…GVLV, IVVF…LVTF, and FFVM…ILAI.

Belongs to the complex I subunit 4L family. NDH-1 is composed of 14 different subunits. Subunits NuoA, H, J, K, L, M, N constitute the membrane sector of the complex.

Its subcellular location is the cell membrane. The catalysed reaction is a quinone + NADH + 5 H(+)(in) = a quinol + NAD(+) + 4 H(+)(out). In terms of biological role, NDH-1 shuttles electrons from NADH, via FMN and iron-sulfur (Fe-S) centers, to quinones in the respiratory chain. The immediate electron acceptor for the enzyme in this species is believed to be a menaquinone. Couples the redox reaction to proton translocation (for every two electrons transferred, four hydrogen ions are translocated across the cytoplasmic membrane), and thus conserves the redox energy in a proton gradient. The sequence is that of NADH-quinone oxidoreductase subunit K from Parafrankia sp. (strain EAN1pec).